The sequence spans 2212 residues: MALAVAAPSEWRGILPYNTSKDSPTVHSMKVATDVKNEQGEFGFWDTCVHTVVREHCQRSPDSPAVNAWDGSFTYAELDSLSDAIASVLILFGVKPESIIPIYMHKSRWTTVAILGVLKSGGAFTLLDPSHPRSRLEEICKEIQARFILTSEELSKQCSEMSSVLVVEHLSRACLLSPGQAGQTPSRPENAAYIAFTSGSTGKPKGIVIEHRSYCSGARSHLKVFGIDSTSRVLQFASYAFDVSIMETLSTLMAGGCLCVMSESERSDPNLFVESYKNFRISHCFMTPSFARTVQWTECCNPPPTLIVGGELMRPSDTRAYKAMGICCMNAYGPAECSVNVSVQSRVEDGVDPRNIGYTTGATAWIISPENPEQLMPPGTVGELLVEGPIVGRGYLNDPSATRQAFIDTPGWLRRHRKGTSYQHRVYRTGDLASQDSISGALLLHGRKDAQVKIRGQRVELPDIEHHLQQTLPDGDAEVIVEKVTFSDDGAEKLIAFVLIPPSSTGFITDNMGDRLFLAPQSQIMEQFAISKKHLQTNLPSYMVPDIFIPISTIPQTVSGKTDRKALRTRAAALSRRDVQCYLLSPTGDKRPPSTLKETTIRSLYSKVLNLPIDLIGMDDTFLRLGGDSLQAIRLVAAARTAGLVLHAKDILSSQSTLAEQSQRAGLIQTSDHTGEASTPFALLPVATRHDIVDLAQKQCRVSSKLIEDIYPCTALQEGMFMTSLRHPGMYTGQITFDIPDRMELPRLRAAWLSVVSKNAALRTRIIETHEGLMQAVIVDDFAWEEETDEMLPSGRWEVLEITKIGVPLVRFRYRPRHRQLIMTIHHSIWDGWSLRLVHEQLQRAYIGRDPLPSTSYRSFIQYGQDLPGADEFWASELAGVNAPIFPTLPSGNYRPCVNASHRHGVRKLVSTGRGEHTAATYIHLAWSLLVAHYTDADETVYGVTVNGRSADVPGIENIVGPTIATVPLRIRVNQEDTVKMALDQVQDSLARMIPYEQAGLQRISRCSRDASEACRFQTLLIIEAPADRDVACEKNEAKNFSIIRGTTQTGMDYTAFSPYAMMLIFRTSADKSAITLDITYDAQVIGCVEVERMAHQFEHVLRHIYKRATGRIGDISFLGPRDIEQVQQWNSYMPPADNRFLQELIFARCSRRPQASAIISWDGSWTYRELWAHSSFFARQLQRYGVTRGTPVAVCLDRSRWSIAVILAVLLAGGTCVLIDLLSPRQRVRDILQIVGAGIMVNSHATAPVTSGLCPTVIDVSLLVAQNDDSQTECPFNLDTWERGVGTPEDLAFIMFTSGSTGHPKGIEMPHRTLSTSIYHHSAGMKVKSSSRVLHFSSYAFDVSIYEIFTTLAAGGTICVPSEFDRMNNLSGFIQDTQVNWAFLTPSTARSLDPADVPLLTTLVLGGEAVTHESVEAWAKGRSLINGYGPAEATICGVGNIPEAGWKSGVIGQIVGGLGWVTVPSDPNRLAAVGAVGELLLEGPFLARGYLNLPEVTRAAFIDPPSWRTQIPAPSPYPFLYRTGDLVQYQPDGSIQYIGRKDSRIKLRGQLVDLSAVEASLMRVYPAAIQVVADVLVSENTTRLIAMMKLGPPVTETHDDPLFEAPDLAFNEAAASVQARLRAIVPPYMVPSMFIPLRHIPRTLTGKTDRRQLRDKLLSLSQSDLQRYIMSSSAKTPMSDDNERRLQEIWAEVLQLPCEAIGREDSFLLLGGESLATMKMVALARRVGFVFAVADVLNNTSLSTLAQFRHLITEDDIPSPSPSLSLSTIESQSLQKILRPLQNGGLIQGGNDIAAIHPVTAAQAFLVQRYPWSHFQFDLSGAISPSKLQTACTTLMARFTILRTVFVEHAGHLLQLVLREVRKCVHEITTDEPLDDFCNSLCQQQQGVCVVNSTALPTLFTLVSNRQLNRHRLLLRLAHAQYDLTTIPLIVQALADEYNGTLRAGFSSDFSYYLNHHMRQTNDDRAHTFWNQYLSGSFMTSTDQTADTTTPQERIFHVTGSCTVTPASHPLGITTATAVKAAVCLVLASRTGCTDIVVGQTVDARCSSADGTLDQIVGPCTNYIPYRLSVCCSKTALEYLCSAQAQHTTSLRYSSLDLDQIVAKCTSWPSSTQFGYIVQHQNTGADLALSLAGCTTSSPMTSYGHVFPQGEVWIGSTPYSTGLKIDVIAPSAVLSQEDAQAMAGEVGAALENLLACGDRPLSDLIGNTFAT.

An adenylation 1 region spans residues 74-473 (TYAELDSLSD…IEHHLQQTLP (400 aa)). The region spanning 592–669 (PPSTLKETTI…EQSQRAGLIQ (78 aa)) is the Carrier 1 domain. Serine 629 is modified (O-(pantetheine 4'-phosphoryl)serine). Residues 708–973 (EDIYPCTALQ…IATVPLRIRV (266 aa)) form a condensation 1 region. Residues 1167 to 1564 (TYRELWAHSS…LSAVEASLMR (398 aa)) are adenylation 2. Residues 1678 to 1757 (PMSDDNERRL…QFRHLITEDD (80 aa)) enclose the Carrier 2 domain. An O-(pantetheine 4'-phosphoryl)serine modification is found at serine 1715. Residues 1815-2070 (HFQFDLSGAI…CTNYIPYRLS (256 aa)) are condensation 2.

This sequence belongs to the NRP synthetase family.

It catalyses the reaction L-proline + L-tryptophan + 2 ATP = brevianamide F + 2 AMP + 2 diphosphate + 2 H(+). It functions in the pathway mycotoxin biosynthesis. Its function is as follows. Nonribosomal peptide synthetase; part of the gene cluster that mediates the biosynthesis of fumitremorgins, indole alkaloids that carry not only intriguing chemical structures, but also interesting biological and pharmacological activities. The biosynthesis of fumitremorgin-type alkaloids begins by condensation of the two amino acids L-tryptophan and L-proline to brevianamide F, catalyzed by the non-ribosomal peptide synthetase ftmPS/ftmA. Brevianamide F is then prenylated by the prenyltransferase ftmPT1/ftmB in the presence of dimethylallyl diphosphate, resulting in the formation of tryprostatin B. The three cytochrome P450 monooxygenases, ftmP450-1/ftmC, ftmP450-2/ftmE and ftmP450-3/FtmG, are responsible for the conversion of tryprostatin B to 6-hydroxytryprostatin B, tryprostatin A to fumitremorgin C and fumitremorgin C to 12,13-dihydroxyfumitremorgin C, respectively. The putative methyltransferase ftmMT/ftmD is expected for the conversion of 6-hydroxytryprostatin B to tryprostatin A. FtmPT2/FtmH catalyzes the prenylation of 12,13-dihydroxyfumitre-morgin C in the presence of dimethylallyl diphosphate, resulting in the formation of fumitremorgin B. Fumitremorgin B is further converted to verruculogen by ftmOx1/ftmF via the insertion of an endoperoxide bond between the two prenyl moieties. Finally, verruculogen is further converted to fumitremorgin A by the verruculogen prenyltransferase ftmPT3. The protein is Nonribosomal peptide synthetase ftmPS (ftmPS) of Neosartorya fischeri (strain ATCC 1020 / DSM 3700 / CBS 544.65 / FGSC A1164 / JCM 1740 / NRRL 181 / WB 181) (Aspergillus fischerianus).